Reading from the N-terminus, the 230-residue chain is Orotidine 5'-phosphate decarboxylase (230 aa).

Residues Asp-11, Lys-34, 61-70 (DLKLHDIPNT), Thr-117, Arg-179, Gln-188, Gly-208, and Arg-209 contribute to the substrate site. Lys-63 (proton donor) is an active-site residue.

This sequence belongs to the OMP decarboxylase family. Type 1 subfamily. As to quaternary structure, homodimer.

The catalysed reaction is orotidine 5'-phosphate + H(+) = UMP + CO2. The protein operates within pyrimidine metabolism; UMP biosynthesis via de novo pathway; UMP from orotate: step 2/2. In terms of biological role, catalyzes the decarboxylation of orotidine 5'-monophosphate (OMP) to uridine 5'-monophosphate (UMP). This Streptococcus sanguinis (strain SK36) protein is Orotidine 5'-phosphate decarboxylase.